Consider the following 285-residue polypeptide: Nucleotide-binding protein Gmet_1286 (285 aa).

8 to 15 is an ATP binding site; the sequence is GLSGSGKS. 59–62 lines the GTP pocket; that stretch reads DIRG.

This sequence belongs to the RapZ-like family.

Functionally, displays ATPase and GTPase activities. The protein is Nucleotide-binding protein Gmet_1286 of Geobacter metallireducens (strain ATCC 53774 / DSM 7210 / GS-15).